The primary structure comprises 496 residues: Serine/threonine-protein kinase Sgk3 (496 aa).

The region spanning 12-124 (SCPSVSIPSS…AFLQMDSPRH (113 aa)) is the PX domain. Residues 121–157 (SPRHQSDPSEDEDERSTPKPHSTSRNINLGPTGNPHA) are disordered. Phosphoserine is present on residues serine 126 and serine 129. Over residues 139–151 (KPHSTSRNINLGP) the composition is skewed to polar residues. Positions 162–464 (FDFLKVIGKG…EETVPYSVCV (303 aa)) constitute a Protein kinase domain. Residues 168–176 (IGKGSFGKV) and lysine 191 each bind ATP. Residues 195–205 (KKIVLNRKEQK) carry the Nuclear localization signal motif. Aspartate 286 functions as the Proton acceptor in the catalytic mechanism. Phosphothreonine; by PDPK1 is present on threonine 320. The AGC-kinase C-terminal domain occupies 420-496 (ESLSWTDLVQ…YAPPSEDLFL (77 aa)). Phosphoserine is present on serine 486.

The protein belongs to the protein kinase superfamily. AGC Ser/Thr protein kinase family. Interacts with GSK3B and FLII. Interacts with PDPK1 in a phosphorylation-dependent manner. In terms of processing, activated by phosphorylation on Ser-486 by an unknown kinase (may be mTORC2 but not confirmed), transforming it into a substrate for PDPK1 which then phosphorylates it on Thr-320.

The protein resides in the cytoplasmic vesicle. It localises to the early endosome. The protein localises to the recycling endosome. It catalyses the reaction L-seryl-[protein] + ATP = O-phospho-L-seryl-[protein] + ADP + H(+). It carries out the reaction L-threonyl-[protein] + ATP = O-phospho-L-threonyl-[protein] + ADP + H(+). With respect to regulation, two specific sites, one in the kinase domain (Thr-320) and the other in the C-terminal regulatory region (Ser-486), need to be phosphorylated for its full activation. Functionally, serine/threonine-protein kinase which is involved in the regulation of a wide variety of ion channels, membrane transporters, cell growth, proliferation, survival and migration. Up-regulates Na(+) channels: SCNN1A/ENAC and SCN5A, K(+) channels: KCNA3/KV1.3, KCNE1, KCNQ1 and KCNH2/HERG, epithelial Ca(2+) channels: TRPV5 and TRPV6, chloride channel: BSND, creatine transporter: SLC6A8, Na(+)/dicarboxylate cotransporter: SLC13A2/NADC1, Na(+)-dependent phosphate cotransporter: SLC34A2/NAPI-2B, amino acid transporters: SLC1A5/ASCT2 and SLC6A19, glutamate transporters: SLC1A3/EAAT1, SLC1A6/EAAT4 and SLC1A7/EAAT5, glutamate receptors: GRIA1/GLUR1 and GRIK2/GLUR6, Na(+)/H(+) exchanger: SLC9A3/NHE3, and the Na(+)/K(+) ATPase. Plays a role in the regulation of renal tubular phosphate transport and bone density. Phosphorylates NEDD4L and GSK3B. Positively regulates ER transcription activity through phosphorylation of FLII. Negatively regulates the function of ITCH/AIP4 via its phosphorylation and thereby prevents CXCR4 from being efficiently sorted to lysosomes. This chain is Serine/threonine-protein kinase Sgk3 (Sgk3), found in Rattus norvegicus (Rat).